Reading from the N-terminus, the 342-residue chain is Prenyl transferase penC (342 aa).

Residues 17 to 37 (LSYLTLTVGALALVVVLYISI) traverse the membrane as a helical segment. Position 110 (His110) interacts with isopentenyl diphosphate. Mg(2+) contacts are provided by Asp117 and Asp121. Arg126 provides a ligand contact to dimethylallyl diphosphate. Asn154 carries N-linked (GlcNAc...) asparagine glycosylation. Lys210 is a dimethylallyl diphosphate binding site.

This sequence belongs to the FPP/GGPP synthase family.

The protein localises to the membrane. It functions in the pathway secondary metabolite biosynthesis. In terms of biological role, prenyl transferase; part of the gene cluster that mediates the biosynthesis of the indole diterpenes penitrems. The geranylgeranyl diphosphate (GGPP) synthase penG catalyzes the first step in penitrem biosynthesis via conversion of farnesyl pyrophosphate and isopentyl pyrophosphate into geranylgeranyl pyrophosphate (GGPP). Condensation of indole-3-glycerol phosphate with GGPP by the prenyl transferase penC then forms 3-geranylgeranylindole (3-GGI). Epoxidation by the FAD-dependent monooxygenase penM leads to a epoxidized-GGI that is substrate of the terpene cyclase penB for cyclization to yield paspaline. Paspaline is subsequently converted to 13-desoxypaxilline by the cytochrome P450 monooxygenase penP, the latter being then converted to paxilline by the cytochrome P450 monooxygenase penQ. Paxilline is converted to beta-paxitriol via C-10 ketoreduction by the short-chain dehydrogenase PC-15 which can be monoprenylated at the C-20 by the indole diterpene prenyltransferase penD. A two-step elimination (acetylation and elimination) process performed by the O-acetyltransferase PC-16 and the P.simplicissimum ptmI-ortholog not yet identified in P.crustosum, leads to the production of the prenylated form of penijanthine. The FAD-linked oxidoreductase ptmO then converts the prenylated form of penijanthine into PC-M5 which is in turn transformed into PC-M4 by the aromatic dimethylallyltransferase PC-22. A series of oxidation steps involving 4 cytochrome P450 monooxygenases (PC-21, PC-05, PC-23, PC-20) and a FAD-dependent monooxygenase (PC-14) are required for the transformation of PC-M4 to penitrems A and E. Synthesis of these final products is proposed to proceed via penitrems D and C (PC-21, PC-05, PC-14) and penitrems B and F (PC-21, PC-05, PC-14, PC-23). This chain is Prenyl transferase penC, found in Penicillium crustosum (Blue mold fungus).